Here is a 221-residue protein sequence, read N- to C-terminus: Veficolin-1 (221 aa).

Positions 1–25 are cleaved as a signal peptide; it reads MTAWLDFPLALSPLVVVSMKGGSFG. The 55-residue stretch at 50-104 folds into the Collagen-like domain; that stretch reads QGQAGIPGIPGVPGTNGLPGAKGDLGPQGPPGERGSTGIPGKAGPKGDKGDQGEA. The interval 54-104 is disordered; that stretch reads GIPGIPGVPGTNGLPGAKGDLGPQGPPGERGSTGIPGKAGPKGDKGDQGEA. One can recognise a Fibrinogen C-terminal domain in the interval 111–221; that stretch reads QQQEAGAKDC…DFNNSKTFAK (111 aa). An intrachain disulfide couples C120 to C148.

Belongs to the ficolin lectin family. Veficolin subfamily. In terms of tissue distribution, expressed by the mandibular venom duct.

Its subcellular location is the secreted. In terms of biological role, initiates complement activation and/or interferes in platelet aggregation and/or blood coagulation. This chain is Veficolin-1, found in Varanus komodoensis (Komodo dragon).